Reading from the N-terminus, the 492-residue chain is GTPase Obg (492 aa).

Residues 2–159 (PRFVDRVVIH…RELTLELKTV (158 aa)) form the Obg domain. Residues 160-340 (ADVGLIGFPS…LIFGLWQMIS (181 aa)) enclose the OBG-type G domain. GTP contacts are provided by residues 166–173 (GFPSAGKS), 191–195 (FTTLV), 212–215 (DVPG), 292–295 (NKID), and 321–323 (STV). The Mg(2+) site is built by S173 and T193. Positions 358–438 (PVPVDDSGFR…IGDMTFDWEP (81 aa)) constitute an OCT domain. Residues 441–492 (PAGQQVVLSGRGTDARLERTERVGAAERKAARRQRRTGDDAERGTTERGENT) form a disordered region. 2 stretches are compositionally biased toward basic and acidic residues: residues 453-469 (TDARLERTERVGAAERK) and 476-492 (RTGDDAERGTTERGENT).

Belongs to the TRAFAC class OBG-HflX-like GTPase superfamily. OBG GTPase family. In terms of assembly, monomer. The cofactor is Mg(2+).

It localises to the cytoplasm. Its function is as follows. An essential GTPase which binds GTP, GDP and possibly (p)ppGpp with moderate affinity, with high nucleotide exchange rates and a fairly low GTP hydrolysis rate. Plays a role in control of the cell cycle, stress response, ribosome biogenesis and in those bacteria that undergo differentiation, in morphogenesis control. The sequence is that of GTPase Obg from Mycolicibacterium paratuberculosis (strain ATCC BAA-968 / K-10) (Mycobacterium paratuberculosis).